The primary structure comprises 409 residues: N-acetylglucosamine-6-phosphate deacetylase (409 aa).

Glu-143 lines the a divalent metal cation pocket. Substrate is bound at residue 154–155 (AH). Positions 211 and 232 each coordinate a divalent metal cation. Residues 235–236 (NA), Arg-243, and 269–272 (DGIH) contribute to the substrate site. The active-site Proton donor/acceptor is Asp-294. Residue 328–330 (LSG) participates in substrate binding.

Belongs to the metallo-dependent hydrolases superfamily. NagA family. It depends on a divalent metal cation as a cofactor.

The enzyme catalyses N-acetyl-D-glucosamine 6-phosphate + H2O = D-glucosamine 6-phosphate + acetate. The protein operates within amino-sugar metabolism; N-acetylneuraminate degradation. Its function is as follows. Hydrolyzes the N-glycolyl group from N-glycolylglucosamine 6-phosphate (GlcNGc-6-P) in the N-glycolylneuraminic acid (Neu5Gc) degradation pathway. The protein is N-acetylglucosamine-6-phosphate deacetylase (AMDHD2) of Bos taurus (Bovine).